A 226-amino-acid polypeptide reads, in one-letter code: MYLLIPAAGMGKRMGSDRNKLLLTLHGKPLLAWTLLAAMESRAIIWIGIMAQPEDFEEIRAIITPINALKPVQIIQGGETRQKSVYNGLQALPEGAETVLIHDGARCLATPELFDRCAAALATCQGFIAAIPVKDTIKIVDSKGWIEDTPDRSRLWAAQTPQGFQVKLLKECHEQGRKLDWEVTDDAALLEKCGFPVKIVVGEETNLKITTPGDLAIAEYILSQRL.

Belongs to the IspD/TarI cytidylyltransferase family. IspD subfamily.

The enzyme catalyses 2-C-methyl-D-erythritol 4-phosphate + CTP + H(+) = 4-CDP-2-C-methyl-D-erythritol + diphosphate. The protein operates within isoprenoid biosynthesis; isopentenyl diphosphate biosynthesis via DXP pathway; isopentenyl diphosphate from 1-deoxy-D-xylulose 5-phosphate: step 2/6. Catalyzes the formation of 4-diphosphocytidyl-2-C-methyl-D-erythritol from CTP and 2-C-methyl-D-erythritol 4-phosphate (MEP). This chain is 2-C-methyl-D-erythritol 4-phosphate cytidylyltransferase, found in Microcystis aeruginosa (strain NIES-843 / IAM M-2473).